Consider the following 573-residue polypeptide: Mucin-13 (573 aa).

Positions 1–17 (MKGFLLLSLSLLLVTVG) are cleaved as a signal peptide. The segment covering 16–234 (VGSSSQASST…VPSGGSTGPS (219 aa)) has biased composition (low complexity). The segment at 16 to 237 (VGSSSQASST…GGSTGPSDLC (222 aa)) is disordered. The Extracellular segment spans residues 18–480 (SSSQASSTTS…FGYSGMNCKD (463 aa)). Positions 233 to 273 (PSDLCNPNPCKGTASCVKLHSKHFCLCLEGYYYNSSLSSCV) constitute an EGF-like 1 domain. Intrachain disulfides connect Cys-237-Cys-248, Cys-242-Cys-257, and Cys-259-Cys-272. Residues Asn-266, Asn-316, and Asn-397 are each glycosylated (N-linked (GlcNAc...) asparagine). Residues 274 to 391 (KGTTFPGDIS…DYVSINLCDH (118 aa)) enclose the SEA domain. EGF-like domains are found at residues 385–425 (SINL…PFCV) and 425–467 (VAVT…RKCE). 6 disulfides stabilise this stretch: Cys-389/Cys-402, Cys-394/Cys-408, Cys-410/Cys-424, Cys-429/Cys-441, Cys-433/Cys-451, and Cys-453/Cys-466. The helical transmembrane segment at 481–508 (QFQLILTIVGTIAGALILILLIAFIVSA) threads the bilayer. The Cytoplasmic portion of the chain corresponds to 509–573 (RSKNKKKDGE…NQRSMPRPDY (65 aa)). The disordered stretch occupies residues 548-573 (PKVRTGVPSQTPNPYANQRSMPRPDY). Over residues 554-567 (VPSQTPNPYANQRS) the composition is skewed to polar residues.

Homodimer of beta subunits. Post-translationally, cleaved into two subunits, alpha and beta, probably between the first EGF domain and the SEA domain. Beta subunit contains the cytoplasmic tail and alpha subunit the extracellular tail. The homooligomerization into dimers is dependent on intrachain disulfide bonds. In terms of processing, highly N-glycosylated.

The protein localises to the cell membrane. It localises to the secreted. Its function is as follows. Epithelial and hemopoietic transmembrane mucin that may play a role in cell signaling. The chain is Mucin-13 (Muc13) from Mus musculus (Mouse).